A 504-amino-acid chain; its full sequence is Peptidyl-prolyl cis-trans isomerase-like 4 (504 aa).

The PPIase cyclophilin-type domain maps to 1 to 169 (MSVMLETSLG…QNIRIRHVEI (169 aa)). The RRM domain occupies 246–324 (NILFVCKLNP…RRIWVDFSQS (79 aa)). Positions 330-339 (RSMLSSSNPT) are enriched in polar residues. The interval 330-504 (RSMLSSSNPT…RERDDRDRRR (175 aa)) is disordered. The segment covering 340–354 (GRGGRGGRGGRGGNY) has biased composition (gly residues). Basic and acidic residues-rich tracts occupy residues 356 to 381 (GRRD…DSRR) and 416 to 504 (SKRD…DRRR).

It belongs to the cyclophilin-type PPIase family. PPIL4 subfamily.

The protein resides in the nucleus. The catalysed reaction is [protein]-peptidylproline (omega=180) = [protein]-peptidylproline (omega=0). Functionally, PPIases accelerate the folding of proteins. It catalyzes the cis-trans isomerization of proline imidic peptide bonds in oligopeptides. This Cryptococcus neoformans var. neoformans serotype D (strain B-3501A) (Filobasidiella neoformans) protein is Peptidyl-prolyl cis-trans isomerase-like 4 (CYP6).